We begin with the raw amino-acid sequence, 144 residues long: Small ribosomal subunit protein eS19A (144 aa).

Positions 83–102 are disordered; it reads VNRGMRPSHHRDGSGSVQRK.

The protein belongs to the eukaryotic ribosomal protein eS19 family. In terms of assembly, component of the small ribosomal subunit (SSU). Mature yeast ribosomes consist of a small (40S) and a large (60S) subunit. The 40S small subunit contains 1 molecule of ribosomal RNA (18S rRNA) and at least 33 different proteins. The large 60S subunit contains 3 rRNA molecules (25S, 5.8S and 5S rRNA) and at least 46 different proteins.

It localises to the cytoplasm. It is found in the nucleus. Its subcellular location is the nucleolus. Component of the ribosome, a large ribonucleoprotein complex responsible for the synthesis of proteins in the cell. The small ribosomal subunit (SSU) binds messenger RNAs (mRNAs) and translates the encoded message by selecting cognate aminoacyl-transfer RNA (tRNA) molecules. The large subunit (LSU) contains the ribosomal catalytic site termed the peptidyl transferase center (PTC), which catalyzes the formation of peptide bonds, thereby polymerizing the amino acids delivered by tRNAs into a polypeptide chain. The nascent polypeptides leave the ribosome through a tunnel in the LSU and interact with protein factors that function in enzymatic processing, targeting, and the membrane insertion of nascent chains at the exit of the ribosomal tunnel. eS19 is required for proper maturation of the small (40S) ribosomal subunit. Binds to 40S pre-ribosomal particles, probably required after association of NOC4 but before association of ENP1, TSR1 and RIO2 with 20/21S pre-rRNA. This is Small ribosomal subunit protein eS19A (rps1901) from Schizosaccharomyces pombe (strain 972 / ATCC 24843) (Fission yeast).